The chain runs to 224 residues: Phosphoglycolate phosphatase (224 aa).

The active-site Nucleophile is the Asp8. Residues Asp8 and Asp10 each contribute to the Mg(2+) site. Lys151 is a substrate binding site. Residues Asp174 and Asp178 each coordinate Mg(2+).

The protein belongs to the archaeal SPP-like hydrolase family. The cofactor is Mg(2+).

The catalysed reaction is 2-phosphoglycolate + H2O = glycolate + phosphate. Functionally, catalyzes the dephosphorylation of 2-phosphoglycolate. The polypeptide is Phosphoglycolate phosphatase (Thermoplasma volcanium (strain ATCC 51530 / DSM 4299 / JCM 9571 / NBRC 15438 / GSS1)).